We begin with the raw amino-acid sequence, 155 residues long: UPF0178 protein Gmet_1725 (155 aa).

This sequence belongs to the UPF0178 family.

This chain is UPF0178 protein Gmet_1725, found in Geobacter metallireducens (strain ATCC 53774 / DSM 7210 / GS-15).